The chain runs to 545 residues: MKCSTFCFWYVCKIIFFFLSFNIQISIANPQENFLKCFSQYIPTNVTNAKLVYTQHDQFYMSILNSTIQNLRFTSDTTPKPLVIITPLNVSHIQGTILCSKKVGLQIRTRSGGHDAEGMSYISQVPFVIVDLRNMHSVKIDVHSQTAWVEAGATLGEVYYWINENNENLSFPAGYCPTVGAGGHFSGGGYGALMRNYGLAADNIIDAHLVNVDGKVLDRKSMGEDLFWAIRGGGGENFGIIAAWKIRLVAVPSMSTIFSVKKNMEIHELVKLVNKWQNIAYMYEKELLLFTHFITRNITDNQGKNKTTIHSYFSSIFHGGVDSLVDLMNKSFPELGIKKTDCKQLSWIDTIIFYSGVVNYNTTYFKKEILLDRSGGRKAAFSIKLDYVKKPIPETAMVTILEKLYEEDVGVGMFVFYPYGGIMDEISESAIPFPHRAGIMYEIWYIASWEKQEDNEKHINWIRNVYNFTTPYVSQNPRMAYLNYRDLDLGKTNFESPNNYTQARIWGEKYFGKNFNRLVKVKTKVDPDNFFRNEQSIPPLPLRHH.

The first 28 residues, 1-28 (MKCSTFCFWYVCKIIFFFLSFNIQISIA), serve as a signal peptide directing secretion. A disulfide bridge connects residues C37 and C99. Residues N45, N65, N89, and N168 are each glycosylated (N-linked (GlcNAc...) asparagine). The 175-residue stretch at 77-251 (TTPKPLVIIT…AAWKIRLVAV (175 aa)) folds into the FAD-binding PCMH-type domain. Residues 114–176 (HDAEGMSYIS…ENLSFPAGYC (63 aa)) constitute a cross-link (6-(S-cysteinyl)-8alpha-(pros-histidyl)-FAD (His-Cys)). H292 is a binding site for substrate. Residues N297, N305, N329, and N361 are each glycosylated (N-linked (GlcNAc...) asparagine). Y417 is a substrate binding site. N467 carries N-linked (GlcNAc...) asparagine glycosylation. Y484 acts as the Proton acceptor in catalysis. An N-linked (GlcNAc...) asparagine glycan is attached at N499.

This sequence belongs to the oxygen-dependent FAD-linked oxidoreductase family. Requires FAD as cofactor. In terms of processing, the FAD cofactor is bound via a bicovalent 6-S-cysteinyl, 8alpha-N1-histidyl FAD linkage.

The protein resides in the secreted. In terms of biological role, has no cannabidiolic acid synthase activity. The protein is Cannabidiolic acid synthase-like 1 (CBDAS2) of Cannabis sativa (Hemp).